The primary structure comprises 364 residues: Aminomethyltransferase (364 aa).

It belongs to the GcvT family. In terms of assembly, the glycine cleavage system is composed of four proteins: P, T, L and H.

The catalysed reaction is N(6)-[(R)-S(8)-aminomethyldihydrolipoyl]-L-lysyl-[protein] + (6S)-5,6,7,8-tetrahydrofolate = N(6)-[(R)-dihydrolipoyl]-L-lysyl-[protein] + (6R)-5,10-methylene-5,6,7,8-tetrahydrofolate + NH4(+). Functionally, the glycine cleavage system catalyzes the degradation of glycine. In Shewanella baltica (strain OS223), this protein is Aminomethyltransferase.